Consider the following 195-residue polypeptide: E3 ubiquitin-protein ligase ZNRF1 (195 aa).

The segment covering 1–10 (MGGKQSSASR) has biased composition (polar residues). Positions 1-37 (MGGKQSSASRSRAPFPGVSSDDSAVPPSSNFGHFRGG) are disordered. Glycine 2 is lipidated: N-myristoyl glycine. Residues 18–29 (VSSDDSAVPPSS) show a composition bias toward low complexity. Residues 152 to 193 (CVICLEELSQGDTIARLPCLCIYHKSCIDSWFEVNRCCPEHP) form an RING-type; atypical zinc finger.

It is found in the endosome. The protein localises to the lysosome. It localises to the membrane. The catalysed reaction is S-ubiquitinyl-[E2 ubiquitin-conjugating enzyme]-L-cysteine + [acceptor protein]-L-lysine = [E2 ubiquitin-conjugating enzyme]-L-cysteine + N(6)-ubiquitinyl-[acceptor protein]-L-lysine.. Its pathway is protein modification; protein ubiquitination. Its function is as follows. E3 ubiquitin-protein ligase that plays a role in neuron cells differentiation. Plays a role in the establishment and maintenance of neuronal transmission and plasticity. The polypeptide is E3 ubiquitin-protein ligase ZNRF1 (znrf1) (Xenopus laevis (African clawed frog)).